A 624-amino-acid chain; its full sequence is Ubiquitin carboxyl-terminal hydrolase 16 (624 aa).

Residues Val-46 to Glu-620 form the USP domain. Residue Cys-55 is the Nucleophile of the active site. His-424 (proton acceptor) is an active-site residue. Residues Ser-453–Ala-573 form a disordered region. Positions Ser-479–Ser-496 are enriched in low complexity. Positions Val-518–Asp-544 are enriched in polar residues. A compositionally biased stretch (low complexity) spans Ala-546–Ala-573.

The protein belongs to the peptidase C19 family.

The catalysed reaction is Thiol-dependent hydrolysis of ester, thioester, amide, peptide and isopeptide bonds formed by the C-terminal Gly of ubiquitin (a 76-residue protein attached to proteins as an intracellular targeting signal).. The polypeptide is Ubiquitin carboxyl-terminal hydrolase 16 (ubp16) (Emericella nidulans (strain FGSC A4 / ATCC 38163 / CBS 112.46 / NRRL 194 / M139) (Aspergillus nidulans)).